Here is a 398-residue protein sequence, read N- to C-terminus: Probable RNA methyltransferase sce1580 (398 aa).

The segment at 1–24 (MRVPEIPEETASPLRAGDPPAQVA) is disordered. Residue E140 is the Proton acceptor of the active site. A Radical SAM core domain is found at 146–378 (GPARTTLCVS…TLVRRPRGRD (233 aa)). A disulfide bond links C153 and C383. Residues C160, C164, and C167 each contribute to the [4Fe-4S] cluster site. S-adenosyl-L-methionine-binding positions include 211-212 (GE), S243, 265-267 (SLN), and N340. The active-site S-methylcysteine intermediate is the C383.

Belongs to the radical SAM superfamily. RlmN family. The cofactor is [4Fe-4S] cluster.

The protein resides in the cytoplasm. This is Probable RNA methyltransferase sce1580 from Sorangium cellulosum (strain So ce56) (Polyangium cellulosum (strain So ce56)).